A 137-amino-acid polypeptide reads, in one-letter code: Nucleoside diphosphate kinase (137 aa).

Residues lysine 9, phenylalanine 57, arginine 85, threonine 91, arginine 102, and asparagine 112 each contribute to the ATP site. The active-site Pros-phosphohistidine intermediate is the histidine 115.

This sequence belongs to the NDK family. In terms of assembly, homotetramer. Mg(2+) serves as cofactor.

Its subcellular location is the cytoplasm. It catalyses the reaction a 2'-deoxyribonucleoside 5'-diphosphate + ATP = a 2'-deoxyribonucleoside 5'-triphosphate + ADP. The enzyme catalyses a ribonucleoside 5'-diphosphate + ATP = a ribonucleoside 5'-triphosphate + ADP. Its function is as follows. Major role in the synthesis of nucleoside triphosphates other than ATP. The ATP gamma phosphate is transferred to the NDP beta phosphate via a ping-pong mechanism, using a phosphorylated active-site intermediate. The chain is Nucleoside diphosphate kinase from Geotalea uraniireducens (strain Rf4) (Geobacter uraniireducens).